Here is a 290-residue protein sequence, read N- to C-terminus: Ribosomal RNA small subunit methyltransferase A (290 aa).

The S-adenosyl-L-methionine site is built by H37, V39, G64, E85, D115, and N132.

This sequence belongs to the class I-like SAM-binding methyltransferase superfamily. rRNA adenine N(6)-methyltransferase family. RsmA subfamily.

It is found in the cytoplasm. It catalyses the reaction adenosine(1518)/adenosine(1519) in 16S rRNA + 4 S-adenosyl-L-methionine = N(6)-dimethyladenosine(1518)/N(6)-dimethyladenosine(1519) in 16S rRNA + 4 S-adenosyl-L-homocysteine + 4 H(+). Its function is as follows. Specifically dimethylates two adjacent adenosines (A1518 and A1519) in the loop of a conserved hairpin near the 3'-end of 16S rRNA in the 30S particle. May play a critical role in biogenesis of 30S subunits. The protein is Ribosomal RNA small subunit methyltransferase A of Acidothermus cellulolyticus (strain ATCC 43068 / DSM 8971 / 11B).